Consider the following 365-residue polypeptide: Carbamoyl phosphate synthase small chain (365 aa).

2 CPSase regions span residues 1–166 and 1–169; these read MKRQ…PSPG and MKRQ…GRGH. Residues serine 45, glycine 218, and glycine 220 each coordinate L-glutamine. One can recognise a Glutamine amidotransferase type-1 domain in the interval 170–357; that stretch reads RVVLVDFGMK…LTMIENFKKE (188 aa). Cysteine 245 (nucleophile) is an active-site residue. Leucine 246, glutamine 249, asparagine 287, glycine 289, and tyrosine 290 together coordinate L-glutamine. Active-site residues include histidine 330 and glutamate 332.

It belongs to the CarA family. In terms of assembly, composed of two chains; the small (or glutamine) chain promotes the hydrolysis of glutamine to ammonia, which is used by the large (or ammonia) chain to synthesize carbamoyl phosphate. Tetramer of heterodimers (alpha,beta)4.

It carries out the reaction hydrogencarbonate + L-glutamine + 2 ATP + H2O = carbamoyl phosphate + L-glutamate + 2 ADP + phosphate + 2 H(+). The enzyme catalyses L-glutamine + H2O = L-glutamate + NH4(+). It functions in the pathway amino-acid biosynthesis; L-arginine biosynthesis; carbamoyl phosphate from bicarbonate: step 1/1. The protein operates within pyrimidine metabolism; UMP biosynthesis via de novo pathway; (S)-dihydroorotate from bicarbonate: step 1/3. Its function is as follows. Small subunit of the glutamine-dependent carbamoyl phosphate synthetase (CPSase). CPSase catalyzes the formation of carbamoyl phosphate from the ammonia moiety of glutamine, carbonate, and phosphate donated by ATP, constituting the first step of 2 biosynthetic pathways, one leading to arginine and/or urea and the other to pyrimidine nucleotides. The small subunit (glutamine amidotransferase) binds and cleaves glutamine to supply the large subunit with the substrate ammonia. The protein is Carbamoyl phosphate synthase small chain of Bacillus cereus (strain ATCC 10987 / NRS 248).